Here is a 268-residue protein sequence, read N- to C-terminus: Glutamate racemase (268 aa).

Residues 9–10 (DS) and 41–42 (YG) contribute to the substrate site. Cys-73 acts as the Proton donor/acceptor in catalysis. Residue 74–75 (NS) participates in substrate binding. The active-site Proton donor/acceptor is the Cys-183. Residue 184 to 185 (TH) participates in substrate binding.

This sequence belongs to the aspartate/glutamate racemases family.

It catalyses the reaction L-glutamate = D-glutamate. It functions in the pathway cell wall biogenesis; peptidoglycan biosynthesis. Its function is as follows. Provides the (R)-glutamate required for cell wall biosynthesis. The polypeptide is Glutamate racemase (Shewanella pealeana (strain ATCC 700345 / ANG-SQ1)).